A 709-amino-acid chain; its full sequence is Elongation factor G (709 aa).

The tr-type G domain occupies 10 to 295; that stretch reads NQIRNIGIMA…AVVDYLPSPE (286 aa). GTP-binding positions include 19–26, 91–95, and 145–148; these read AHIDAGKT, DTPGH, and NKMD.

The protein belongs to the TRAFAC class translation factor GTPase superfamily. Classic translation factor GTPase family. EF-G/EF-2 subfamily.

The protein resides in the cytoplasm. Its function is as follows. Catalyzes the GTP-dependent ribosomal translocation step during translation elongation. During this step, the ribosome changes from the pre-translocational (PRE) to the post-translocational (POST) state as the newly formed A-site-bound peptidyl-tRNA and P-site-bound deacylated tRNA move to the P and E sites, respectively. Catalyzes the coordinated movement of the two tRNA molecules, the mRNA and conformational changes in the ribosome. The polypeptide is Elongation factor G (Bifidobacterium adolescentis (strain ATCC 15703 / DSM 20083 / NCTC 11814 / E194a)).